Reading from the N-terminus, the 764-residue chain is 5-methyltetrahydropteroyltriglutamate--homocysteine methyltransferase (764 aa).

5-methyltetrahydropteroyltri-L-glutamate is bound by residues 16-19 and lysine 112; that span reads RELK. L-homocysteine-binding positions include 431–433 and glutamate 484; that span reads IGS. L-methionine-binding positions include 431-433 and glutamate 484; that span reads IGS. Residues 515–516 and tryptophan 561 each bind 5-methyltetrahydropteroyltri-L-glutamate; that span reads RC. Aspartate 599 provides a ligand contact to L-homocysteine. Aspartate 599 contributes to the L-methionine binding site. Glutamate 605 serves as a coordination point for 5-methyltetrahydropteroyltri-L-glutamate. 3 residues coordinate Zn(2+): histidine 641, cysteine 643, and glutamate 665. The Proton donor role is filled by histidine 694. A Zn(2+)-binding site is contributed by cysteine 726.

Belongs to the vitamin-B12 independent methionine synthase family. Zn(2+) is required as a cofactor.

The catalysed reaction is 5-methyltetrahydropteroyltri-L-glutamate + L-homocysteine = tetrahydropteroyltri-L-glutamate + L-methionine. Its pathway is amino-acid biosynthesis; L-methionine biosynthesis via de novo pathway; L-methionine from L-homocysteine (MetE route): step 1/1. Its function is as follows. Catalyzes the transfer of a methyl group from 5-methyltetrahydrofolate to homocysteine resulting in methionine formation. This is 5-methyltetrahydropteroyltriglutamate--homocysteine methyltransferase from Paraburkholderia phytofirmans (strain DSM 17436 / LMG 22146 / PsJN) (Burkholderia phytofirmans).